A 259-amino-acid polypeptide reads, in one-letter code: Sugar fermentation stimulation protein homolog (259 aa).

It belongs to the SfsA family.

The protein is Sugar fermentation stimulation protein homolog of Chloroflexus aurantiacus (strain ATCC 29364 / DSM 637 / Y-400-fl).